The chain runs to 891 residues: Protein translocase subunit SecA (891 aa).

ATP contacts are provided by residues Q83, 101–105 (GEGKT), and D489.

It belongs to the SecA family.

The protein resides in the plastid. The protein localises to the chloroplast stroma. It localises to the chloroplast thylakoid membrane. It catalyses the reaction ATP + H2O + cellular proteinSide 1 = ADP + phosphate + cellular proteinSide 2.. Functionally, has a central role in coupling the hydrolysis of ATP to the transfer of proteins across the thylakoid membrane. This chain is Protein translocase subunit SecA, found in Diacronema lutheri (Unicellular marine alga).